Consider the following 683-residue polypeptide: Glucosylceramidase (683 aa).

The Proton donor role is filled by E254. E483 functions as the Nucleophile in the catalytic mechanism.

The protein belongs to the glycosyl hydrolase 5 (cellulase A) family.

It localises to the membrane. The enzyme catalyses a beta-D-glucosyl-(1&lt;-&gt;1')-N-acylsphing-4-enine + H2O = an N-acylsphing-4-enine + D-glucose. Its activity is regulated as follows. Inhibited by metal cations Co(2+), Cu(2+), Ni(2+), Pb(2+) and Zn(2+). Not inhibited by metal chelator ethylenediaminetetraacetic acid (EDTA). Functionally, specifically hydrolyzes the glucosidic linkage in glucosylceramide. May prevent accumulation of aberrent glucosylceramide containing immature ceramide. The protein is Glucosylceramidase of Rhizopus delemar (strain RA 99-880 / ATCC MYA-4621 / FGSC 9543 / NRRL 43880) (Mucormycosis agent).